Here is a 344-residue protein sequence, read N- to C-terminus: Acireductone dioxygenase (344 aa).

Fe(2+)-binding residues include His92, His94, Glu98, and His137. Residues His92, His94, Glu98, and His137 each contribute to the Ni(2+) site.

Belongs to the acireductone dioxygenase (ARD) family. Fe(2+) serves as cofactor. It depends on Ni(2+) as a cofactor.

Its subcellular location is the cytoplasm. It localises to the nucleus. The enzyme catalyses 1,2-dihydroxy-5-(methylsulfanyl)pent-1-en-3-one + O2 = 4-methylsulfanyl-2-oxobutanoate + formate + 2 H(+). It carries out the reaction 1,2-dihydroxy-5-(methylsulfanyl)pent-1-en-3-one + O2 = 3-(methylsulfanyl)propanoate + CO + formate + 2 H(+). It participates in amino-acid biosynthesis; L-methionine biosynthesis via salvage pathway; L-methionine from S-methyl-5-thio-alpha-D-ribose 1-phosphate: step 5/6. In terms of biological role, catalyzes 2 different reactions between oxygen and the acireductone 1,2-dihydroxy-3-keto-5-methylthiopentene (DHK-MTPene) depending upon the metal bound in the active site. Fe-containing acireductone dioxygenase (Fe-ARD) produces formate and 2-keto-4-methylthiobutyrate (KMTB), the alpha-ketoacid precursor of methionine in the methionine recycle pathway. Ni-containing acireductone dioxygenase (Ni-ARD) produces methylthiopropionate, carbon monoxide and formate, and does not lie on the methionine recycle pathway. This is Acireductone dioxygenase from Leishmania major.